The primary structure comprises 762 residues: Probable inorganic carbon transporter subunit DabA (762 aa).

Residues cysteine 279, aspartate 281, histidine 461, and cysteine 476 each contribute to the Zn(2+) site.

This sequence belongs to the inorganic carbon transporter (TC 9.A.2) DabA family. Forms a complex with DabB. Requires Zn(2+) as cofactor.

It is found in the cell inner membrane. Part of an energy-coupled inorganic carbon pump. The protein is Probable inorganic carbon transporter subunit DabA of Legionella pneumophila subsp. pneumophila (strain Philadelphia 1 / ATCC 33152 / DSM 7513).